Consider the following 262-residue polypeptide: MTILNEIIEYKKTLLERKYYDKKLEILQDNGNVKRRKLIDSLNYDRTLSVIAEIKSKSPSVPQLPQRDLVQQVKDYQKYGANAISILTDEKYFGGSFERLNQLSKITSLPVLCKDFIIDKIQIDVAKRAGASIILLIVNILSDDQLKELYSYAINHNLEVLVEVHTIRELERAHQINPKIIGVNNRDLKRFETDVLHTNKLLKFKKSNCCYISESGIHTKEDVEKIVDSNIDGLLVGEALMKTNDLSQFLPSLKLKKNLYDS.

This sequence belongs to the TrpC family.

The enzyme catalyses 1-(2-carboxyphenylamino)-1-deoxy-D-ribulose 5-phosphate + H(+) = (1S,2R)-1-C-(indol-3-yl)glycerol 3-phosphate + CO2 + H2O. It functions in the pathway amino-acid biosynthesis; L-tryptophan biosynthesis; L-tryptophan from chorismate: step 4/5. The chain is Indole-3-glycerol phosphate synthase from Staphylococcus epidermidis (strain ATCC 12228 / FDA PCI 1200).